The chain runs to 283 residues: Protein BASIC PENTACYSTEINE5 (283 aa).

The tract at residues 51–86 (AVKERNEAVAATKEALASRDEALEQRDKALSERDNA) is alanine-zipper. The stretch at 63–89 (KEALASRDEALEQRDKALSERDNAIME) forms a coiled coil. Residues 122–176 (EESHLPNPSPISTIPPEAANTRPTKRKKESKQGKKMGEDLNRPVASPGKKSRKDW) form a disordered region. The span at 151-162 (SKQGKKMGEDLN) shows a compositional bias: basic and acidic residues.

This sequence belongs to the BBR/BPC family. In terms of assembly, homodimer. Heterodimer. Expressed in seedlings, leaves and pistils.

The protein localises to the nucleus. Functionally, transcriptional regulator that specifically binds to GA-rich elements (GAGA-repeats) present in regulatory sequences of genes involved in developmental processes. This chain is Protein BASIC PENTACYSTEINE5 (BPC5), found in Arabidopsis thaliana (Mouse-ear cress).